Here is a 256-residue protein sequence, read N- to C-terminus: Thiazole synthase (256 aa).

The Schiff-base intermediate with DXP role is filled by Lys95. 1-deoxy-D-xylulose 5-phosphate-binding positions include Gly156, 182-183 (AG), and 204-205 (NT).

The protein belongs to the ThiG family. As to quaternary structure, homotetramer. Forms heterodimers with either ThiH or ThiS.

It is found in the cytoplasm. The enzyme catalyses [ThiS sulfur-carrier protein]-C-terminal-Gly-aminoethanethioate + 2-iminoacetate + 1-deoxy-D-xylulose 5-phosphate = [ThiS sulfur-carrier protein]-C-terminal Gly-Gly + 2-[(2R,5Z)-2-carboxy-4-methylthiazol-5(2H)-ylidene]ethyl phosphate + 2 H2O + H(+). It functions in the pathway cofactor biosynthesis; thiamine diphosphate biosynthesis. In terms of biological role, catalyzes the rearrangement of 1-deoxy-D-xylulose 5-phosphate (DXP) to produce the thiazole phosphate moiety of thiamine. Sulfur is provided by the thiocarboxylate moiety of the carrier protein ThiS. In vitro, sulfur can be provided by H(2)S. This Klebsiella pneumoniae subsp. pneumoniae (strain ATCC 700721 / MGH 78578) protein is Thiazole synthase.